Here is a 424-residue protein sequence, read N- to C-terminus: 3-ketoacyl-CoA thiolase B, peroxisomal (424 aa).

A peroxisome-targeting transit peptide spans 1–26 (MHRLQVVLGHLAGRSESSSALQAAPC). Residues 1–26 (MHRLQVVLGHLAGRSESSSALQAAPC) form a PTS2-type peroxisomal targeting signal region. The Acyl-thioester intermediate role is filled by C123. 2 positions are modified to N6-acetyllysine: K173 and K234. CoA-binding residues include R249, T252, and S276. The Proton donor/acceptor role is filled by C408.

This sequence belongs to the thiolase-like superfamily. Thiolase family. As to quaternary structure, homodimer. Interacts (via PTS2-type peroxisomal targeting signal region) with PEX7; leading to its translocation into peroxisomes.

It is found in the peroxisome. It catalyses the reaction an acyl-CoA + acetyl-CoA = a 3-oxoacyl-CoA + CoA. The enzyme catalyses 2 acetyl-CoA = acetoacetyl-CoA + CoA. It carries out the reaction hexanoyl-CoA + acetyl-CoA = 3-oxooctanoyl-CoA + CoA. The catalysed reaction is tetradecanoyl-CoA + acetyl-CoA = 3-oxohexadecanoyl-CoA + CoA. It catalyses the reaction 3-oxohexadecanedioyl-CoA + CoA = tetradecanedioyl-CoA + acetyl-CoA. The enzyme catalyses 3-oxo-(6Z,9Z,12Z,15Z,18Z,21Z)-tetracosahexaenoyl-CoA + CoA = (4Z,7Z,10Z,13Z,16Z,19Z)-docosahexaenoyl-CoA + acetyl-CoA. It participates in lipid metabolism; peroxisomal fatty acid beta-oxidation. In terms of biological role, responsible for the thiolytic cleavage of straight chain 3-keto fatty acyl-CoAs (3-oxoacyl-CoAs). Plays an important role in fatty acid peroxisomal beta-oxidation. Catalyzes the cleavage of short, medium, long, and very long straight chain 3-oxoacyl-CoAs. Medium chain straight 3-oxoacyl-CoAs are preferred substrates. This Rattus norvegicus (Rat) protein is 3-ketoacyl-CoA thiolase B, peroxisomal.